Consider the following 518-residue polypeptide: Glutamate--cysteine ligase (518 aa).

This sequence belongs to the glutamate--cysteine ligase type 1 family. Type 1 subfamily.

The catalysed reaction is L-cysteine + L-glutamate + ATP = gamma-L-glutamyl-L-cysteine + ADP + phosphate + H(+). The protein operates within sulfur metabolism; glutathione biosynthesis; glutathione from L-cysteine and L-glutamate: step 1/2. This Escherichia coli O139:H28 (strain E24377A / ETEC) protein is Glutamate--cysteine ligase.